The primary structure comprises 2190 residues: Integrator complex subunit 1 (2190 aa).

Positions 1–61 (MNRAKPTTVR…GLPSERKRDA (61 aa)) are disordered. Ser-13 is modified (phosphoserine). The span at 34-44 (GQANESKTAST) shows a compositional bias: polar residues. Lys-47 carries the N6-acetyllysine modification. Thr-83 bears the Phosphothreonine mark. 3 positions are modified to phosphoserine: Ser-87, Ser-307, and Ser-924. The disordered stretch occupies residues 922–945 (AASGEEDDEGESKEQKAKKRQRQQ). The segment covering 923–932 (ASGEEDDEGE) has biased composition (acidic residues). Residues 1159 to 1179 (TATMHILVVHAMVILLTLGPP) traverse the membrane as a helical segment. The disordered stretch occupies residues 1311–1334 (SLPPRRDSTEAPKPKSSPEQPIGQ). Over residues 1314–1323 (PRRDSTEAPK) the composition is skewed to basic and acidic residues. Phosphoserine is present on residues Ser-1318, Ser-1326, Ser-1327, and Ser-1395.

This sequence belongs to the Integrator subunit 1 family. Component of the Integrator complex, composed of core subunits INTS1, INTS2, INTS3, INTS4, INTS5, INTS6, INTS7, INTS8, INTS9/RC74, INTS10, INTS11/CPSF3L, INTS12, INTS13, INTS14 and INTS15. The core complex associates with protein phosphatase 2A subunits PPP2CA and PPP2R1A, to form the Integrator-PP2A (INTAC) complex. Interacts with ESRRB, ESRRB is not a core component of the Integrator complex and this association is a bridge for the interaction with the multiprotein complex Integrator; attracts the transcriptional machinery.

Its subcellular location is the nucleus. The protein localises to the nucleus membrane. Component of the integrator complex, a multiprotein complex that terminates RNA polymerase II (Pol II) transcription in the promoter-proximal region of genes. The integrator complex provides a quality checkpoint during transcription elongation by driving premature transcription termination of transcripts that are unfavorably configured for transcriptional elongation: the complex terminates transcription by (1) catalyzing dephosphorylation of the C-terminal domain (CTD) of Pol II subunit POLR2A/RPB1 and SUPT5H/SPT5, (2) degrading the exiting nascent RNA transcript via endonuclease activity and (3) promoting the release of Pol II from bound DNA. The integrator complex is also involved in terminating the synthesis of non-coding Pol II transcripts, such as enhancer RNAs (eRNAs), small nuclear RNAs (snRNAs), telomerase RNAs and long non-coding RNAs (lncRNAs). Within the integrator complex, INTS1 is involved in the post-termination step: INTS1 displaces INTS3 and the SOSS factors, allowing the integrator complex to return to the closed conformation, ready to bind to the paused elongation complex for another termination cycle. Mediates recruitment of cytoplasmic dynein to the nuclear envelope, probably as component of the integrator complex. The polypeptide is Integrator complex subunit 1 (Homo sapiens (Human)).